The chain runs to 98 residues: Small ribosomal subunit protein eS24 (98 aa).

Belongs to the eukaryotic ribosomal protein eS24 family.

This Thermoplasma acidophilum (strain ATCC 25905 / DSM 1728 / JCM 9062 / NBRC 15155 / AMRC-C165) protein is Small ribosomal subunit protein eS24 (rps2e).